Here is a 198-residue protein sequence, read N- to C-terminus: Recombination protein RecR (198 aa).

The C4-type zinc finger occupies 57–72 (CSVCGHITDQDPCYIC). Residues 80–175 (SVICVVQDPK…KLSRIAHGLP (96 aa)) enclose the Toprim domain.

It belongs to the RecR family.

Its function is as follows. May play a role in DNA repair. It seems to be involved in an RecBC-independent recombinational process of DNA repair. It may act with RecF and RecO. In Bacillus pumilus (strain SAFR-032), this protein is Recombination protein RecR.